The primary structure comprises 422 residues: Probable sucrose-phosphatase 2 (422 aa).

This sequence belongs to the sucrose phosphatase family. As to quaternary structure, homodimer. The cofactor is Mg(2+).

It carries out the reaction sucrose 6(F)-phosphate + H2O = sucrose + phosphate. Its pathway is glycan biosynthesis; sucrose biosynthesis; sucrose from D-fructose 6-phosphate and UDP-alpha-D-glucose: step 2/2. Its function is as follows. Catalyzes the final step of sucrose synthesis. The chain is Probable sucrose-phosphatase 2 (SPP2) from Arabidopsis thaliana (Mouse-ear cress).